Reading from the N-terminus, the 757-residue chain is MDVNPTLLFLKVPAQNAISTTFPYTGDPPYSHGTGTGYTMDTVNRTHQYSEKGKWTTNTETGAPQLNPIDGPLPEDNEPSGYAQTDCVLEAMAFLEESHPGIFENSCLETMEVVQQTRVDKLTQGRQTYDWTLNRNQPAATALANTIEVFRSNGLTANESGRLIDFLKDVMDSMDKEEMEITTHFQRKRRVRDNMTKKMVTQRTIGKKKQRLNKKGYLIRALTLNTMTKDAERGKLKRRAIATPGMQIRGFVYFVETLARSICEKLEQSGLPVGGNEKKAKLANVVRKMMTNSQDTELSFTITGDNTKWNENQNPRMFLAMITYITRNQPEWFRNVLSIAPIMFSNKMARLGKGYMFESKSMKLRTQIPAEMLANIDLKYFNESTRKKIEKIRPLLIDGTASLSPGMMMGMFNMLSTVLGVSILNLGQKRYTKTTYWWDGLQSSDDFALIVNAPNHEGIQAGVDRFYRTCKLVGINMSKKKSYINRTGTFEFTSFFYRYGFVANFSMELPSFGVSGINESADMSIGVTVIKNNMINNDLGPATAQMALQLFIKDYRYTYRCHRGDTQIQTRRSFELKKLWDQTRSKAGLLVSDGGPNLYNIRNLHIPEVCLKWELMDEDYQGRLCNPLNPFVSHKEIESINNAVVMPAHGPAKSMEYDAVATTHSWIPKRNRSILNTSQRGILEDEQMYQKCCNLFEKFFPSSSYRRPVGISSMVEAMVSRARIDARIDFESGRIKKEEFSEIMKICCTIEELRRQK.

Positions 50–82 (SEKGKWTTNTETGAPQLNPIDGPLPEDNEPSGY) are disordered. Residues 55 to 64 (WTTNTETGAP) are compositionally biased toward polar residues. Short sequence motifs (nuclear localization signal) lie at residues 187–195 (RKRRVRDNM) and 203–216 (RTIGKKKQRLNKKG). Residues 249–256 (RGFVYFVE) form a promoter-binding site region. The RdRp catalytic domain occupies 286-483 (VRKMMTNSQD…GINMSKKKSY (198 aa)).

The protein belongs to the influenza viruses polymerase PB1 family. As to quaternary structure, influenza RNA polymerase is composed of three subunits: PB1, PB2 and PA. Interacts (via N-terminus) with PA (via C-terminus). Interacts (via C-terminus) with PB2 (via N-terminus); this interaction is essential for transcription initiation. Post-translationally, phosphorylated by host PRKCA.

The protein resides in the host nucleus. Its subcellular location is the host cytoplasm. The enzyme catalyses RNA(n) + a ribonucleoside 5'-triphosphate = RNA(n+1) + diphosphate. In terms of biological role, RNA-dependent RNA polymerase which is responsible for replication and transcription of virus RNA segments. The transcription of viral mRNAs occurs by a unique mechanism called cap-snatching. 5' methylated caps of cellular mRNAs are cleaved after 10-13 nucleotides by PA. In turn, these short capped RNAs are used as primers by PB1 for transcription of viral mRNAs. During virus replication, PB1 initiates RNA synthesis and copy vRNA into complementary RNA (cRNA) which in turn serves as a template for the production of more vRNAs. The polypeptide is RNA-directed RNA polymerase catalytic subunit (Influenza A virus (strain A/Gull/Minnesota/945/1980 H13N6)).